A 138-amino-acid polypeptide reads, in one-letter code: DNA-directed RNA polymerase subunit omega (138 aa).

The segment at glycine 104 to serine 138 is disordered. A compositionally biased stretch (polar residues) spans phenylalanine 126–serine 138.

It belongs to the RNA polymerase subunit omega family. The RNAP catalytic core consists of 2 alpha, 1 beta, 1 beta' and 1 omega subunit. When a sigma factor is associated with the core the holoenzyme is formed, which can initiate transcription.

The catalysed reaction is RNA(n) + a ribonucleoside 5'-triphosphate = RNA(n+1) + diphosphate. Functionally, promotes RNA polymerase assembly. Latches the N- and C-terminal regions of the beta' subunit thereby facilitating its interaction with the beta and alpha subunits. The chain is DNA-directed RNA polymerase subunit omega from Ehrlichia chaffeensis (strain ATCC CRL-10679 / Arkansas).